Here is a 462-residue protein sequence, read N- to C-terminus: Cysteine--tRNA ligase (462 aa).

Residue Cys-30 coordinates Zn(2+). Positions Met-32–His-42 match the 'HIGH' region motif. Positions 214, 239, and 243 each coordinate Zn(2+). The 'KMSKS' region signature appears at Lys-271–Ser-275. An ATP-binding site is contributed by Lys-274.

Belongs to the class-I aminoacyl-tRNA synthetase family. As to quaternary structure, monomer. Zn(2+) serves as cofactor.

Its subcellular location is the cytoplasm. The enzyme catalyses tRNA(Cys) + L-cysteine + ATP = L-cysteinyl-tRNA(Cys) + AMP + diphosphate. This chain is Cysteine--tRNA ligase, found in Cupriavidus taiwanensis (strain DSM 17343 / BCRC 17206 / CCUG 44338 / CIP 107171 / LMG 19424 / R1) (Ralstonia taiwanensis (strain LMG 19424)).